The sequence spans 357 residues: tRNA-specific 2-thiouridylase MnmA (357 aa).

ATP-binding positions include 8 to 15 and isoleucine 34; that span reads GISGGVDS. The active-site Nucleophile is the cysteine 96. Cysteine 96 and cysteine 192 form a disulfide bridge. Glycine 120 lines the ATP pocket. The interval 142 to 144 is interaction with tRNA; sequence KDQ. Residue cysteine 192 is the Cysteine persulfide intermediate of the active site. The tract at residues 301–302 is interaction with tRNA; the sequence is RY.

This sequence belongs to the MnmA/TRMU family.

Its subcellular location is the cytoplasm. The catalysed reaction is S-sulfanyl-L-cysteinyl-[protein] + uridine(34) in tRNA + AH2 + ATP = 2-thiouridine(34) in tRNA + L-cysteinyl-[protein] + A + AMP + diphosphate + H(+). Its function is as follows. Catalyzes the 2-thiolation of uridine at the wobble position (U34) of tRNA, leading to the formation of s(2)U34. This Chlorobium phaeobacteroides (strain DSM 266 / SMG 266 / 2430) protein is tRNA-specific 2-thiouridylase MnmA.